Consider the following 525-residue polypeptide: Protein nucleotidyltransferase YdiU (525 aa).

ATP-binding residues include glycine 107, glycine 109, arginine 110, lysine 129, aspartate 141, glycine 142, arginine 192, and arginine 199. Aspartate 268 functions as the Proton acceptor in the catalytic mechanism. The Mg(2+) site is built by asparagine 269 and aspartate 278. Position 278 (aspartate 278) interacts with ATP.

It belongs to the SELO family. It depends on Mg(2+) as a cofactor. Mn(2+) serves as cofactor.

The enzyme catalyses L-seryl-[protein] + ATP = 3-O-(5'-adenylyl)-L-seryl-[protein] + diphosphate. It carries out the reaction L-threonyl-[protein] + ATP = 3-O-(5'-adenylyl)-L-threonyl-[protein] + diphosphate. It catalyses the reaction L-tyrosyl-[protein] + ATP = O-(5'-adenylyl)-L-tyrosyl-[protein] + diphosphate. The catalysed reaction is L-histidyl-[protein] + UTP = N(tele)-(5'-uridylyl)-L-histidyl-[protein] + diphosphate. The enzyme catalyses L-seryl-[protein] + UTP = O-(5'-uridylyl)-L-seryl-[protein] + diphosphate. It carries out the reaction L-tyrosyl-[protein] + UTP = O-(5'-uridylyl)-L-tyrosyl-[protein] + diphosphate. In terms of biological role, nucleotidyltransferase involved in the post-translational modification of proteins. It can catalyze the addition of adenosine monophosphate (AMP) or uridine monophosphate (UMP) to a protein, resulting in modifications known as AMPylation and UMPylation. The protein is Protein nucleotidyltransferase YdiU of Ralstonia nicotianae (strain ATCC BAA-1114 / GMI1000) (Ralstonia solanacearum).